The primary structure comprises 185 residues: Threonylcarbamoyl-AMP synthase (185 aa).

Residues 4–185 (SFRVQQAARE…LATGEVVRPG (182 aa)) form the YrdC-like domain.

Belongs to the SUA5 family. TsaC subfamily.

It is found in the cytoplasm. It catalyses the reaction L-threonine + hydrogencarbonate + ATP = L-threonylcarbamoyladenylate + diphosphate + H2O. In terms of biological role, required for the formation of a threonylcarbamoyl group on adenosine at position 37 (t(6)A37) in tRNAs that read codons beginning with adenine. Catalyzes the conversion of L-threonine, HCO(3)(-)/CO(2) and ATP to give threonylcarbamoyl-AMP (TC-AMP) as the acyladenylate intermediate, with the release of diphosphate. The polypeptide is Threonylcarbamoyl-AMP synthase (Pseudomonas putida (strain GB-1)).